The chain runs to 326 residues: Transposase InsH for insertion sequence element IS5Y (326 aa).

This sequence belongs to the transposase 11 family.

Involved in the transposition of the insertion sequence IS5. The polypeptide is Transposase InsH for insertion sequence element IS5Y (insH5) (Escherichia coli (strain K12)).